A 431-amino-acid chain; its full sequence is Glutamate--tRNA ligase 1 (431 aa).

A 'HIGH' region motif is present at residues Pro6–Asn16. The 'KMSKS' region motif lies at Lys235–Arg239. Residue Lys238 coordinates ATP.

This sequence belongs to the class-I aminoacyl-tRNA synthetase family. Glutamate--tRNA ligase type 1 subfamily. Monomer.

The protein localises to the cytoplasm. It carries out the reaction tRNA(Glu) + L-glutamate + ATP = L-glutamyl-tRNA(Glu) + AMP + diphosphate. In terms of biological role, catalyzes the attachment of glutamate to tRNA(Glu) in a two-step reaction: glutamate is first activated by ATP to form Glu-AMP and then transferred to the acceptor end of tRNA(Glu). This Campylobacter jejuni (strain RM1221) protein is Glutamate--tRNA ligase 1.